Here is a 585-residue protein sequence, read N- to C-terminus: Amyloid protein-binding protein 2 (585 aa).

TPR repeat units follow at residues glutamine 50 to phenylalanine 83, isoleucine 120 to histidine 153, alanine 206 to glycine 239, serine 288 to valine 321, histidine 333 to isoleucine 367, alanine 429 to leucine 462, alanine 471 to leucine 505, and glutamate 514 to arginine 547.

As to quaternary structure, component of a CRL2 E3 ubiquitin-protein ligase complex, also named ECS (Elongin BC-CUL2/5-SOCS-box protein) complex, composed of CUL2, Elongin BC (ELOB and ELOC), RBX1 and substrate-specific adapter APPBP2. Interacts with APP; APP interaction inhibits the E3 ubiquitin-protein ligase activity of the CRL2(APPBP2) complex. In terms of processing, rapidly degraded by the proteasome upon overexpression of a C-terminal fragment of APP.

Its subcellular location is the nucleus. It is found in the cytoplasm. It localises to the cytoskeleton. The protein localises to the membrane. Its pathway is protein modification; protein ubiquitination. E3 ubiquitin-protein ligase activity of the CRL2(APPBP2) complex is inhibited by APP. In terms of biological role, substrate-recognition component of a Cul2-RING (CRL2) E3 ubiquitin-protein ligase complex of the DesCEND (destruction via C-end degrons) pathway, which recognizes a C-degron located at the extreme C terminus of target proteins, leading to their ubiquitination and degradation. The C-degron recognized by the DesCEND pathway is usually a motif of less than ten residues and can be present in full-length proteins, truncated proteins or proteolytically cleaved forms. The CRL2(APPBP2) complex specifically recognizes proteins with a -Arg-Xaa-Xaa-Gly degron at the C-terminus, leading to their ubiquitination and degradation. The CRL2(APPBP2) complex mediates ubiquitination and degradation of truncated SELENOV selenoproteins produced by failed UGA/Sec decoding, which end with a -Arg-Xaa-Xaa-Gly degron. May play a role in intracellular protein transport: may be involved in the translocation of APP along microtubules toward the cell surface. This Rattus norvegicus (Rat) protein is Amyloid protein-binding protein 2.